A 257-amino-acid chain; its full sequence is 1-(5-phosphoribosyl)-5-[(5-phosphoribosylamino)methylideneamino] imidazole-4-carboxamide isomerase (257 aa).

Aspartate 8 serves as the catalytic Proton acceptor. Catalysis depends on aspartate 129, which acts as the Proton donor.

It belongs to the HisA/HisF family.

Its subcellular location is the cytoplasm. The catalysed reaction is 1-(5-phospho-beta-D-ribosyl)-5-[(5-phospho-beta-D-ribosylamino)methylideneamino]imidazole-4-carboxamide = 5-[(5-phospho-1-deoxy-D-ribulos-1-ylimino)methylamino]-1-(5-phospho-beta-D-ribosyl)imidazole-4-carboxamide. It functions in the pathway amino-acid biosynthesis; L-histidine biosynthesis; L-histidine from 5-phospho-alpha-D-ribose 1-diphosphate: step 4/9. This Thermosynechococcus vestitus (strain NIES-2133 / IAM M-273 / BP-1) protein is 1-(5-phosphoribosyl)-5-[(5-phosphoribosylamino)methylideneamino] imidazole-4-carboxamide isomerase.